Here is a 172-residue protein sequence, read N- to C-terminus: Translation initiation factor IF-3 (172 aa).

Belongs to the IF-3 family. As to quaternary structure, monomer.

Its subcellular location is the cytoplasm. IF-3 binds to the 30S ribosomal subunit and shifts the equilibrium between 70S ribosomes and their 50S and 30S subunits in favor of the free subunits, thus enhancing the availability of 30S subunits on which protein synthesis initiation begins. The sequence is that of Translation initiation factor IF-3 from Oceanobacillus iheyensis (strain DSM 14371 / CIP 107618 / JCM 11309 / KCTC 3954 / HTE831).